Here is a 206-residue protein sequence, read N- to C-terminus: Pyrrolidone-carboxylate peptidase 2 (206 aa).

Active-site residues include glutamate 78, cysteine 141, and histidine 165.

It belongs to the peptidase C15 family. In terms of assembly, homotetramer.

It is found in the cytoplasm. The enzyme catalyses Release of an N-terminal pyroglutamyl group from a polypeptide, the second amino acid generally not being Pro.. Functionally, removes 5-oxoproline from various penultimate amino acid residues except L-proline. This is Pyrrolidone-carboxylate peptidase 2 from Caldanaerobacter subterraneus subsp. tengcongensis (strain DSM 15242 / JCM 11007 / NBRC 100824 / MB4) (Thermoanaerobacter tengcongensis).